The primary structure comprises 20 residues: Alpha-basrubrin (20 aa).

A compositionally biased stretch (basic and acidic residues) spans 1–13 (GADFQECMKEHSQ). A disordered region spans residues 1–20 (GADFQECMKEHSQKQHQHQG).

Its function is as follows. Possesses antifungal activity against B.cinerea, M.arachidicola and F.oxysporum but not C.comatus and R.solani. Inhibits HIV-1 reverse transcriptase and cell-free translation. The chain is Alpha-basrubrin from Basella alba (Malabar spinach).